The following is a 211-amino-acid chain: Arginine exporter protein ArgO (211 aa).

6 helical membrane passes run 1–21 (MISY…PLGP), 37–57 (LMIA…GIFG), 68–88 (LLAL…LGAL), 111–131 (IIAT…DTFV), 147–167 (WFAL…ALLA), and 179–199 (AQRI…FQLA).

This sequence belongs to the LysE/ArgO transporter (TC 2.A.75) family.

The protein localises to the cell inner membrane. The catalysed reaction is L-arginine(in) = L-arginine(out). Functionally, involved in the export of arginine. Important to control the intracellular level of arginine and the correct balance between arginine and lysine. The polypeptide is Arginine exporter protein ArgO (Salmonella enteritidis PT4 (strain P125109)).